Consider the following 464-residue polypeptide: Probable glycosyltransferase Saci_1499 (464 aa).

Transmembrane regions (helical) follow at residues 6–26 (IFLNLLLFVYPAVFIIYQIIL), 300–320 (LIIYLLQYTPVIVTFFISTLL), 337–357 (ALLFWLVSLGLYASLLLSLAL), 373–393 (LTAFTVSISPFIVFNFFKGLL), 416–436 (IIAIIGVFGLLYLLSSILYIY), and 439–459 (YYVTGIWLLYYSSAYLYTMLL).

It belongs to the glycosyltransferase 2 family.

It is found in the cell membrane. Its function is as follows. Probably part of a 4-gene DNA damage response locus in which the upstream ups system, in combination with this downstream locus, functions in homologous recombination to rescue Sulfolobales from DNA-damaging threats. The chain is Probable glycosyltransferase Saci_1499 from Sulfolobus acidocaldarius (strain ATCC 33909 / DSM 639 / JCM 8929 / NBRC 15157 / NCIMB 11770).